The sequence spans 551 residues: MVAHAEINNLSFVYADENEYALQHISLSIQKGEFIVLAGGSGSGKTTLLKHFKKELLPIGKRTGDTYYDGTLLENVPDLLSAQEIGMVFQNPENQLVMDTVIQELAFSLENIGLPSHIIQKRIAELISFLGFQDLLHQSVHTLSGGQKQLVNLAAVLVMQPKLLLLDEPTAQLDPIAAKEFLGLLKRINEELGITIVLSEHRLDEVIPLATRVICMSNGRIVYDGSPKTVVANMWEVEKFRPFIPQIPRLFLEWNAKDIPFTVREAQMKLNNFSAISYVNKPIAQSEKQEVILSAEHISFQYEKNSPLILRDLTVSIEKGEWVALVGKNGTGKSTLLTLLAGLQKARRGKVKWNGKVIHKIDSKERFKSIGYVSQHPYYHFTFDTVWDEVYERARELYGEQGKEIAEHQLKKFWLYGLKERHPHDCSGGEQQLLALCTTLLSKPTLLLLDEPTKGLDPWKKERVGELFRKLQKEGTTIVMATHDIEFAAKYVDQCMMLFDGAVIMNDAPKEFFSGNFFYTTSINRFIRKELPYALTWEDVYEACPNDILHS.

ABC transporter domains lie at Ala-5–Phe-243 and Leu-293–Arg-525. ATP contacts are provided by residues Gly-39 to Thr-46 and Gly-327 to Ser-334.

It belongs to the ABC transporter superfamily.

It localises to the cell membrane. Probably part of an ABC transporter complex. Responsible for energy coupling to the transport system. This chain is Putative ABC transporter ATP-binding protein BT9727_3105, found in Bacillus thuringiensis subsp. konkukian (strain 97-27).